Here is a 915-residue protein sequence, read N- to C-terminus: Metabotropic glutamate receptor 7 (915 aa).

Positions 1-34 (MVQLGKLLRVLTLMKFPCCVLEVLLCVLAAAARG) are cleaved as a signal peptide. Residues 35 to 590 (QEMYAPHSIR…IIKLEWHSPW (556 aa)) are Extracellular-facing. Cysteines 67 and 109 form a disulfide. Asn-98 carries an N-linked (GlcNAc...) asparagine glycan. L-glutamate contacts are provided by residues Ser-159, 180 to 182 (AST), Tyr-230, and Asp-314. 7 disulfide bridges follow: Cys-249–Cys-541, Cys-374–Cys-390, Cys-430–Cys-437, Cys-523–Cys-542, Cys-527–Cys-545, Cys-548–Cys-560, and Cys-563–Cys-576. Residue Lys-407 coordinates L-glutamate. N-linked (GlcNAc...) asparagine glycans are attached at residues Asn-458 and Asn-486. The N-linked (GlcNAc...) asparagine glycan is linked to Asn-572. Residues 591–615 (AVIPVFLAMLGIIATIFVMATFIRY) traverse the membrane as a helical segment. Over 616-627 (NDTPIVRASGRE) the chain is Cytoplasmic. The helical transmembrane segment at 628–648 (LSYVLLTGIFLCYIITFLMIA) threads the bilayer. At 649-654 (KPDVAV) the chain is on the extracellular side. The chain crosses the membrane as a helical span at residues 655-675 (CSFRRVFLGLGMCISYAALLT). Over 676-702 (KTNRIYRIFEQGKKSVTAPRLISPTSQ) the chain is Cytoplasmic. A helical membrane pass occupies residues 703–723 (LAITSSLISVQLLGVFIWFGV). Residues 724 to 753 (DPPNIIIDYDEHKTMNPEQARGVLKCDITD) lie on the Extracellular side of the membrane. A helical membrane pass occupies residues 754-775 (LQIICSLGYSILLMVTCTVYAI). At 776–788 (KTRGVPENFNEAK) the chain is on the cytoplasmic side. Residues 789-810 (PIGFTMYTTCIVWLAFIPIFFG) traverse the membrane as a helical segment. Topologically, residues 811-825 (TAQSAEKLYIQTTTL) are extracellular. A helical membrane pass occupies residues 826-850 (TISMNLSASVALGMLYMPKVYIIIF). Residues 851–915 (HPELNVQKRK…KYVSYNNLVI (65 aa)) lie on the Cytoplasmic side of the membrane. Residues 874–895 (SRLSHKPSDRPNGEAKTELCEN) form a disordered region. Over residues 879 to 892 (KPSDRPNGEAKTEL) the composition is skewed to basic and acidic residues. A Phosphoserine modification is found at Ser-900.

The protein belongs to the G-protein coupled receptor 3 family. In terms of assembly, homodimer. Interacts with PICK1. In terms of tissue distribution, widely distributed throughout the brain.

The protein localises to the cell membrane. In terms of biological role, G-protein coupled receptor activated by glutamate that regulates axon outgrowth through the MAPK-cAMP-PKA signaling pathway during neuronal development. Ligand binding causes a conformation change that triggers signaling via guanine nucleotide-binding proteins (G proteins) and modulates the activity of downstream effectors, such as adenylate cyclase that it inhibits. The sequence is that of Metabotropic glutamate receptor 7 (Grm7) from Rattus norvegicus (Rat).